Consider the following 429-residue polypeptide: Serine hydroxymethyltransferase (429 aa).

(6S)-5,6,7,8-tetrahydrofolate-binding positions include Leu-126 and 130 to 132; that span reads GHL. An N6-(pyridoxal phosphate)lysine modification is found at Lys-235.

This sequence belongs to the SHMT family. As to quaternary structure, homodimer. The cofactor is pyridoxal 5'-phosphate.

The protein resides in the cytoplasm. The enzyme catalyses (6R)-5,10-methylene-5,6,7,8-tetrahydrofolate + glycine + H2O = (6S)-5,6,7,8-tetrahydrofolate + L-serine. It participates in one-carbon metabolism; tetrahydrofolate interconversion. The protein operates within amino-acid biosynthesis; glycine biosynthesis; glycine from L-serine: step 1/1. Catalyzes the reversible interconversion of serine and glycine with tetrahydrofolate (THF) serving as the one-carbon carrier. This reaction serves as the major source of one-carbon groups required for the biosynthesis of purines, thymidylate, methionine, and other important biomolecules. Also exhibits THF-independent aldolase activity toward beta-hydroxyamino acids, producing glycine and aldehydes, via a retro-aldol mechanism. The protein is Serine hydroxymethyltransferase of Zymomonas mobilis subsp. mobilis (strain ATCC 31821 / ZM4 / CP4).